We begin with the raw amino-acid sequence, 293 residues long: Proline iminopeptidase (293 aa).

The active-site Nucleophile is S105. Residue D244 is part of the active site. The active-site Proton donor is H271.

It belongs to the peptidase S33 family. As to quaternary structure, part of the tricorn proteolytic complex.

The catalysed reaction is Release of N-terminal proline from a peptide.. In terms of biological role, cleaves H-Pro-AMC as well as a wide spectrum of amino acid substrates and several peptide substrates without a proline at the N-terminus. Proteases F1, F2 and F3 degrade oligopeptides produced by Tricorn (themselves probably produced by the proteasome) yielding free amino acids. This chain is Proline iminopeptidase (pip), found in Thermoplasma acidophilum (strain ATCC 25905 / DSM 1728 / JCM 9062 / NBRC 15155 / AMRC-C165).